The following is a 156-amino-acid chain: Ribosomal RNA large subunit methyltransferase H (156 aa).

S-adenosyl-L-methionine is bound by residues Leu74, Gly105, and 124–129 (LSKLTL).

Belongs to the RNA methyltransferase RlmH family. As to quaternary structure, homodimer.

The protein localises to the cytoplasm. It catalyses the reaction pseudouridine(1915) in 23S rRNA + S-adenosyl-L-methionine = N(3)-methylpseudouridine(1915) in 23S rRNA + S-adenosyl-L-homocysteine + H(+). Its function is as follows. Specifically methylates the pseudouridine at position 1915 (m3Psi1915) in 23S rRNA. The protein is Ribosomal RNA large subunit methyltransferase H of Legionella pneumophila (strain Lens).